We begin with the raw amino-acid sequence, 134 residues long: Large ribosomal subunit protein uL22 (134 aa).

Belongs to the universal ribosomal protein uL22 family. In terms of assembly, part of the 50S ribosomal subunit.

Functionally, this protein binds specifically to 23S rRNA; its binding is stimulated by other ribosomal proteins, e.g. L4, L17, and L20. It is important during the early stages of 50S assembly. It makes multiple contacts with different domains of the 23S rRNA in the assembled 50S subunit and ribosome. The globular domain of the protein is located near the polypeptide exit tunnel on the outside of the subunit, while an extended beta-hairpin is found that lines the wall of the exit tunnel in the center of the 70S ribosome. This chain is Large ribosomal subunit protein uL22, found in Rhodococcus jostii (strain RHA1).